A 425-amino-acid polypeptide reads, in one-letter code: Pleckstrin homology domain-containing family A member 2 (425 aa).

The PH 1 domain maps to 7-113 (QNRICGFLDI…WVEALNQASK (107 aa)). K141 participates in a covalent cross-link: Glycyl lysine isopeptide (Lys-Gly) (interchain with G-Cter in SUMO2). Residue S184 is modified to Phosphoserine. In terms of domain architecture, PH 2 spans 198–298 (PLIKSGYCVK…WIKEIGAAVQ (101 aa)). A compositionally biased stretch (low complexity) spans 312–330 (SISLTRPGSSSLSSGPNSI). Residues 312–332 (SISLTRPGSSSLSSGPNSILC) form a disordered region. S314 and S349 each carry phosphoserine. The tract at residues 352–425 (SSWQPWTPVP…DDENIRTSDV (74 aa)) is disordered. Positions 400-410 (RSEPQHPKEKP) are enriched in basic and acidic residues.

As to quaternary structure, binds MPDZ and PTPN13. In terms of tissue distribution, highly expressed in heart, kidney, spleen and peripheral blood leukocytes. Detected at lower levels in brain, skeletal muscle, colon, thymus, liver, small intestine, placenta and lung.

It is found in the cytoplasm. The protein resides in the cell membrane. It localises to the nucleus. Its function is as follows. Binds specifically to phosphatidylinositol 3,4-diphosphate (PtdIns3,4P2), but not to other phosphoinositides. May recruit other proteins to the plasma membrane. This is Pleckstrin homology domain-containing family A member 2 (PLEKHA2) from Homo sapiens (Human).